Reading from the N-terminus, the 218-residue chain is Probable nicotinate-nucleotide adenylyltransferase (218 aa).

This sequence belongs to the NadD family.

The catalysed reaction is nicotinate beta-D-ribonucleotide + ATP + H(+) = deamido-NAD(+) + diphosphate. It functions in the pathway cofactor biosynthesis; NAD(+) biosynthesis; deamido-NAD(+) from nicotinate D-ribonucleotide: step 1/1. Its function is as follows. Catalyzes the reversible adenylation of nicotinate mononucleotide (NaMN) to nicotinic acid adenine dinucleotide (NaAD). The chain is Probable nicotinate-nucleotide adenylyltransferase from Burkholderia cenocepacia (strain ATCC BAA-245 / DSM 16553 / LMG 16656 / NCTC 13227 / J2315 / CF5610) (Burkholderia cepacia (strain J2315)).